Here is a 124-residue protein sequence, read N- to C-terminus: Fluoride-specific ion channel FluC 2 (124 aa).

A run of 4 helical transmembrane segments spans residues 8-28 (LPNQ…GALV), 34-54 (NDLL…GLPF), 60-80 (LLLG…MVEC), and 93-113 (LGLI…GFLI). Na(+)-binding residues include Gly-68 and Thr-71.

Belongs to the fluoride channel Fluc/FEX (TC 1.A.43) family.

It is found in the cell inner membrane. The enzyme catalyses fluoride(in) = fluoride(out). Its activity is regulated as follows. Na(+) is not transported, but it plays an essential structural role and its presence is essential for fluoride channel function. Fluoride-specific ion channel. Important for reducing fluoride concentration in the cell, thus reducing its toxicity. This is Fluoride-specific ion channel FluC 2 from Prochlorococcus marinus (strain MIT 9313).